We begin with the raw amino-acid sequence, 596 residues long: MGSGASRLLTACTCSRPAPASVDAEPCLDDALGHSFCYAAAATATAHSSSFRHGISGAALSANSSVPVPLYNASAAAGGVAPGYSSAFHTSSSFSSAPLQLSNLSSGPLFLSGPIDRAGQLSGPLDPAVPFSGPLPAKPPKPASSSSRGFSRRFRKPSFGSLRRSVSEKNRPCAVPLRRDDGVQWAHGRAGEDRVHVVVSEDQRWLFVGIYDGFNGPEAPDFLVTNLYRFLLRELRGIFYKEADADNKKLWQFLVDGDDDDSELDFSGSGRFALSLDRLKESRFHMWAHAAADESGREWGSRRLAPAPAVRDHAAVLAALTRALASTEAAYLDMTDQSMGTHPELAVTGACLLVALVRDDNVYVMNLGDSRAIVAQRPDDGDDGCVFGTMRRMEDVGVGLEIETRPGGCAIIGLKPLQLSTDHSTSIEEEVHRIKREHPDDDQCIVNDRVKGRLKVTRAFGAGYLKQAKLNNGLLEMFRNDYIGDTPYISCTPSLCHHKLTARDQFLVLSSDGLYQYLSNEEVVLHVENFMERFPEGDPAQSLIEELLSRAAKKAGMDFYELLDIPQGDRRKYHDDVTVMVISLEGRIWKSSGTYV.

The disordered stretch occupies residues 122–154 (SGPLDPAVPFSGPLPAKPPKPASSSSRGFSRRF). Residues 177–584 (LRRDDGVQWA…DDVTVMVISL (408 aa)) enclose the PPM-type phosphatase domain. Mn(2+) contacts are provided by D212, G213, D512, and D575.

The protein belongs to the PP2C family. Mg(2+) is required as a cofactor. Mn(2+) serves as cofactor.

It catalyses the reaction O-phospho-L-seryl-[protein] + H2O = L-seryl-[protein] + phosphate. It carries out the reaction O-phospho-L-threonyl-[protein] + H2O = L-threonyl-[protein] + phosphate. The protein is Probable protein phosphatase 2C 26 of Oryza sativa subsp. japonica (Rice).